Here is a 286-residue protein sequence, read N- to C-terminus: Perivitellin-2 31 kDa subunit (286 aa).

An N-terminal signal peptide occupies residues 1–30; the sequence is MVKKIHFVMERHASIVAFLLAVLALTESQA. N101 is a glycosylation site (N-linked (GlcNAc...) asparagine).

It belongs to the tectonin family. As to quaternary structure, perivitellin-2 is a dimer of heterodimers held together head-to-tail by non-covalent forces. The heterodimer is composed of the tachylectin subunit (31 kDa) and the MACPF subunit (67 kDa) that are disulfide-linked. PV2 is a very high density lipoprotein (VHDL). It contains 3.75% of lipids. The major lipid classes are free sterols and phospholipids and also have significant quantities of energy-providing triacylglycerides and free fatty acids. Produced by albumen secretory cells. Found in developing eggs.

It localises to the secreted. It is found in the target cell membrane. The egg defensive protein perivitellin-2 is a pore-forming two-subunit glycoprotein that affects both the nervous and digestive systems of mammals. In addition, it is a source of both structural and energetic molecules during embryonic development. The tachylectin subunit (31 kDa) binds target membranes while the MACPF subunit (67 kDa) disrupts lipid bilayers forming large pores (inner diameter of about 5.6 nm) altering the plasma membrance conductance. Both in vivo and in vitro, the protein shows wide pH range stability and is resistant to enzymatic proteolysis from gastrointestinal environments. It is cytotoxic to both epithelial and immune cells from the digestive system of mammals. It induces enterocyte death by a lytic mechanism and disrupts enterocyte monolayers in a dose-dependent manner. After oral administration to mice, it binds enterocytes and induces large dose-dependent morphological changes on their small intestine mucosa, reducing the absorptive surface. Additionally, it is detected in the Peyer's patches where it activates lymphoid follicles and triggers apoptosis. The toxin can also traverse the intestinal barrier and induce oral adaptive immunity with evidence of circulating antibody response. The toxin also shows hemagglutination properties thanks to the tachylectin subunit, but has no hemolytic activity. In addition to enterotoxin activity, the toxin also acts as a neurotoxin, since an intraperitoneal injection can induce paralysis of the mice rear limbs, followed by death. This chain is Perivitellin-2 31 kDa subunit, found in Pomacea maculata (Giant applesnail).